Consider the following 180-residue polypeptide: Adenine phosphoribosyltransferase (180 aa).

Ser-2 is modified (N-acetylserine). Phosphoserine occurs at positions 15 and 30. Position 60 is a phosphotyrosine (Tyr-60). Residue Ser-66 is modified to Phosphoserine. Lys-114 is modified (N6-acetyllysine). Thr-135 is subject to Phosphothreonine.

It belongs to the purine/pyrimidine phosphoribosyltransferase family. In terms of assembly, homodimer.

The protein localises to the cytoplasm. It catalyses the reaction AMP + diphosphate = 5-phospho-alpha-D-ribose 1-diphosphate + adenine. It functions in the pathway purine metabolism; AMP biosynthesis via salvage pathway; AMP from adenine: step 1/1. Functionally, catalyzes a salvage reaction resulting in the formation of AMP, that is energically less costly than de novo synthesis. The chain is Adenine phosphoribosyltransferase from Mus musculus (Mouse).